Consider the following 74-residue polypeptide: Ribosome modulation factor (74 aa).

The protein belongs to the ribosome modulation factor family.

The protein resides in the cytoplasm. Functionally, during stationary phase, converts 70S ribosomes to an inactive dimeric form (100S ribosomes). The chain is Ribosome modulation factor from Cellvibrio japonicus (strain Ueda107) (Pseudomonas fluorescens subsp. cellulosa).